The primary structure comprises 252 residues: uncharacterized protein (252 aa).

It belongs to the LarE family.

This is an uncharacterized protein from Methanocaldococcus jannaschii (strain ATCC 43067 / DSM 2661 / JAL-1 / JCM 10045 / NBRC 100440) (Methanococcus jannaschii).